The chain runs to 260 residues: Global transcriptional regulator CodY (260 aa).

Positions 1-159 (MPNLLEKTRK…SSTVVGIQLL (159 aa)) are GAF domain. The H-T-H motif DNA-binding region spans 207–226 (ASVIADRIGITRSVIVNALR).

This sequence belongs to the CodY family.

Its subcellular location is the cytoplasm. In terms of biological role, DNA-binding global transcriptional regulator which is involved in the adaptive response to starvation and acts by directly or indirectly controlling the expression of numerous genes in response to nutrient availability. During rapid exponential growth, CodY is highly active and represses genes whose products allow adaptation to nutrient depletion. This Streptococcus equi subsp. zooepidemicus (strain H70) protein is Global transcriptional regulator CodY.